Reading from the N-terminus, the 250-residue chain is GTP cyclohydrolase 1 type 2 homolog (250 aa).

Residues His-63, His-64, Asp-100, His-218, and Glu-222 each coordinate a divalent metal cation.

Belongs to the GTP cyclohydrolase I type 2/NIF3 family. As to quaternary structure, homohexamer.

The chain is GTP cyclohydrolase 1 type 2 homolog from Pyrococcus abyssi (strain GE5 / Orsay).